The sequence spans 66 residues: Putative membrane protein insertion efficiency factor (66 aa).

Belongs to the UPF0161 family.

It is found in the cell inner membrane. In terms of biological role, could be involved in insertion of integral membrane proteins into the membrane. The sequence is that of Putative membrane protein insertion efficiency factor from Parasynechococcus marenigrum (strain WH8102).